A 268-amino-acid chain; its full sequence is Ribosomal RNA small subunit methyltransferase A (268 aa).

Residues N18, L20, G45, E66, D91, and N112 each coordinate S-adenosyl-L-methionine.

This sequence belongs to the class I-like SAM-binding methyltransferase superfamily. rRNA adenine N(6)-methyltransferase family. RsmA subfamily.

It is found in the cytoplasm. It carries out the reaction adenosine(1518)/adenosine(1519) in 16S rRNA + 4 S-adenosyl-L-methionine = N(6)-dimethyladenosine(1518)/N(6)-dimethyladenosine(1519) in 16S rRNA + 4 S-adenosyl-L-homocysteine + 4 H(+). Its function is as follows. Specifically dimethylates two adjacent adenosines (A1518 and A1519) in the loop of a conserved hairpin near the 3'-end of 16S rRNA in the 30S particle. May play a critical role in biogenesis of 30S subunits. The protein is Ribosomal RNA small subunit methyltransferase A of Vibrio vulnificus (strain CMCP6).